The primary structure comprises 481 residues: Subtilisin-like protease 1 (481 aa).

A signal peptide spans 1-19 (MGVFRFISISLAAVSAANA). The propeptide occupies 20 to 116 (AQILSMPHAQ…VEPDTIISVH (97 aa)). Residues 34-115 (SYIVMMKDDT…FVEPDTIISV (82 aa)) enclose the Inhibitor I9 domain. In terms of domain architecture, Peptidase S8 spans 126–400 (SWGLARISSS…NVLINNGGAK (275 aa)). Catalysis depends on charge relay system residues Asp-158 and His-190. Residues 175–198 (GSNQVNDGDDNDRSGHGTHTSGTM) form a disordered region. Asn-251 is a glycosylation site (N-linked (GlcNAc...) asparagine). Residues 281 to 312 (GNDNTDARSSSPASEPSVCTVGASAEDDSRSS) form a disordered region. Residues 282–294 (NDNTDARSSSPAS) are compositionally biased toward polar residues. The Charge relay system role is filled by Ser-345. The tract at residues 379–455 (ASISDVGPGT…HPHTPFPGGD (77 aa)) is disordered. Pro residues predominate over residues 424-450 (PQQPAPGEPSTPAPAPMPPTPQHPHTP).

This sequence belongs to the peptidase S8 family.

It is found in the secreted. Its function is as follows. Secreted subtilisin-like serine protease with keratinolytic activity that contributes to pathogenicity. This is Subtilisin-like protease 1 (SUB1) from Arthroderma gypseum (strain ATCC MYA-4604 / CBS 118893) (Microsporum gypseum).